A 443-amino-acid polypeptide reads, in one-letter code: Serine/threonine-protein phosphatase 2A 55 kDa regulatory subunit B beta isoform (443 aa).

WD repeat units follow at residues 22-61 (TEAD…KSQP), 87-128 (EIEE…KRPE), 171-209 (AHTY…RSFN), 220-260 (ELTE…LCDN), 279-317 (EIIS…KPLE), 334-375 (ENDC…DVTL), and 410-443 (DFSK…DKVN).

This sequence belongs to the phosphatase 2A regulatory subunit B family. PP2A consists of a common heterodimeric core enzyme, composed of a 36 kDa catalytic subunit (subunit C) and a 65 kDa constant regulatory subunit (PR65 or subunit A), that associates with a variety of regulatory subunits.

It localises to the cytoplasm. The protein localises to the cytoskeleton. Its subcellular location is the membrane. The B regulatory subunit might modulate substrate selectivity and catalytic activity, and might also direct the localization of the catalytic enzyme to a particular subcellular compartment. The sequence is that of Serine/threonine-protein phosphatase 2A 55 kDa regulatory subunit B beta isoform (ppp2r2b) from Carassius auratus (Goldfish).